Reading from the N-terminus, the 642-residue chain is tRNA uridine 5-carboxymethylaminomethyl modification enzyme MnmG (642 aa).

Residues 12 to 17 (GAGHAG), valine 124, and serine 179 contribute to the FAD site. Residue 272-286 (GPRYCPSIEDKITRF) participates in NAD(+) binding. Glutamine 369 contacts FAD.

The protein belongs to the MnmG family. Homodimer. Heterotetramer of two MnmE and two MnmG subunits. FAD is required as a cofactor.

It is found in the cytoplasm. NAD-binding protein involved in the addition of a carboxymethylaminomethyl (cmnm) group at the wobble position (U34) of certain tRNAs, forming tRNA-cmnm(5)s(2)U34. This chain is tRNA uridine 5-carboxymethylaminomethyl modification enzyme MnmG, found in Bdellovibrio bacteriovorus (strain ATCC 15356 / DSM 50701 / NCIMB 9529 / HD100).